Here is a 502-residue protein sequence, read N- to C-terminus: Protein DETOXIFICATION 7 (502 aa).

Transmembrane regions (helical) follow at residues 36-56 (MAAPMVAVSVSQFLLQVISMV), 68-88 (AVAIATSLTNVTGFSLIVGFA), 112-132 (YSSMLCLLVFCFSISIVWFFM), 143-163 (PLISQLACRYSIWLIPALFGF), 182-202 (LFVSSLGALCFHIPFCWLLVY), 208-228 (IVGAALSIGFSYWLNVFLLWI), 262-282 (AMMICLEWWSFEILLLMSGLL), 291-311 (VISICLTTSAVHFVLVNAIGA), 331-351 (AAVNSAIFLGGVGALITTITL), 375-395 (ITPILCLSIFVNSFLAVLSGV), 408-428 (ASLGSYYLVGIPLGWFLCFVM), and 436-456 (WIGILIASTIQLIVFALVTFF).

The protein belongs to the multi antimicrobial extrusion (MATE) (TC 2.A.66.1) family.

Its subcellular location is the membrane. The polypeptide is Protein DETOXIFICATION 7 (Arabidopsis thaliana (Mouse-ear cress)).